Here is a 79-residue protein sequence, read N- to C-terminus: Major outer membrane lipoprotein Lpp 2 (79 aa).

Residues 1-21 (MNRTNQLILGAVVLGSTLLAG) form the signal peptide. Residue Cys-22 is the site of N-palmitoyl cysteine attachment. Residue Cys-22 is the site of S-diacylglycerol cysteine attachment. 2 repeats span residues 25-35 (NAKIDQLSSDV) and 39-49 (SAKVEQLSNDV). The stretch at 28–69 (IDQLSSDVQTLSAKVEQLSNDVNAMRSDVQAAKDDAARANQR) forms a coiled coil. N6-murein peptidoglycan lysine is present on Lys-79.

This sequence belongs to the Lpp family. In terms of assembly, homotrimer.

It localises to the cell outer membrane. The protein resides in the secreted. The protein localises to the cell wall. Its function is as follows. Plays an important role in virulence. A highly abundant outer membrane lipoprotein that controls the distance between the inner and outer membranes. The only protein known to be covalently linked to the peptidoglycan network (PGN). Also non-covalently binds the PGN. The link between the cell outer membrane and PGN contributes to maintenance of the structural and functional integrity of the cell envelope, and maintains the correct distance between the PGN and the outer membrane. In Salmonella typhimurium (strain LT2 / SGSC1412 / ATCC 700720), this protein is Major outer membrane lipoprotein Lpp 2.